The chain runs to 285 residues: Protein unc-1 (285 aa).

2 consecutive transmembrane segments (helical) span residues 27-47 and 69-89; these read IGTI…IVTF and IGRL…IPCI.

Belongs to the band 7/mec-2 family.

Its subcellular location is the cell membrane. The protein resides in the cell junction. It localises to the gap junction. This Caenorhabditis elegans protein is Protein unc-1 (unc-1).